A 341-amino-acid polypeptide reads, in one-letter code: GTP 3',8-cyclase (341 aa).

The Radical SAM core domain maps to 11 to 231 (QKSRPLRDLR…RIINEDMPIE (221 aa)). Arg20 contacts GTP. Positions 27 and 31 each coordinate [4Fe-4S] cluster. Residue Tyr33 coordinates S-adenosyl-L-methionine. Residue Cys34 participates in [4Fe-4S] cluster binding. A GTP-binding site is contributed by Arg75. Gly79 serves as a coordination point for S-adenosyl-L-methionine. Thr106 provides a ligand contact to GTP. An S-adenosyl-L-methionine-binding site is contributed by Ser130. A GTP-binding site is contributed by Lys167. Met201 serves as a coordination point for S-adenosyl-L-methionine. 2 residues coordinate [4Fe-4S] cluster: Cys265 and Cys268. 270–272 (RAR) serves as a coordination point for GTP. Cys282 provides a ligand contact to [4Fe-4S] cluster.

Belongs to the radical SAM superfamily. MoaA family. In terms of assembly, monomer and homodimer. Requires [4Fe-4S] cluster as cofactor.

The enzyme catalyses GTP + AH2 + S-adenosyl-L-methionine = (8S)-3',8-cyclo-7,8-dihydroguanosine 5'-triphosphate + 5'-deoxyadenosine + L-methionine + A + H(+). The protein operates within cofactor biosynthesis; molybdopterin biosynthesis. In terms of biological role, catalyzes the cyclization of GTP to (8S)-3',8-cyclo-7,8-dihydroguanosine 5'-triphosphate. The polypeptide is GTP 3',8-cyclase (Bacillus licheniformis (strain ATCC 14580 / DSM 13 / JCM 2505 / CCUG 7422 / NBRC 12200 / NCIMB 9375 / NCTC 10341 / NRRL NRS-1264 / Gibson 46)).